The chain runs to 317 residues: Spermidine synthase 2 (317 aa).

The PABS domain occupies 27–264 (PGWFSEISPL…GMIGFMLCST (238 aa)). Q58 is an S-adenosyl 3-(methylsulfanyl)propylamine binding site. Y88 serves as a coordination point for putrescine. S-adenosyl 3-(methylsulfanyl)propylamine is bound by residues Q89, D113, E133, 164–165 (DG), and D183. The active-site Proton acceptor is the D183. Putrescine contacts are provided by residues 183–186 (DSSD) and Y252.

It belongs to the spermidine/spermine synthase family.

It catalyses the reaction S-adenosyl 3-(methylsulfanyl)propylamine + putrescine = S-methyl-5'-thioadenosine + spermidine + H(+). Its pathway is amine and polyamine biosynthesis; spermidine biosynthesis; spermidine from putrescine: step 1/1. This is Spermidine synthase 2 from Datura stramonium (Jimsonweed).